A 248-amino-acid polypeptide reads, in one-letter code: Probable transcriptional regulatory protein Bind_0345 (248 aa).

This sequence belongs to the TACO1 family.

It is found in the cytoplasm. The protein is Probable transcriptional regulatory protein Bind_0345 of Beijerinckia indica subsp. indica (strain ATCC 9039 / DSM 1715 / NCIMB 8712).